A 248-amino-acid chain; its full sequence is 3-deoxy-manno-octulosonate cytidylyltransferase (248 aa).

This sequence belongs to the KdsB family.

It is found in the cytoplasm. It carries out the reaction 3-deoxy-alpha-D-manno-oct-2-ulosonate + CTP = CMP-3-deoxy-beta-D-manno-octulosonate + diphosphate. It participates in nucleotide-sugar biosynthesis; CMP-3-deoxy-D-manno-octulosonate biosynthesis; CMP-3-deoxy-D-manno-octulosonate from 3-deoxy-D-manno-octulosonate and CTP: step 1/1. The protein operates within bacterial outer membrane biogenesis; lipopolysaccharide biosynthesis. Functionally, activates KDO (a required 8-carbon sugar) for incorporation into bacterial lipopolysaccharide in Gram-negative bacteria. The chain is 3-deoxy-manno-octulosonate cytidylyltransferase from Erwinia tasmaniensis (strain DSM 17950 / CFBP 7177 / CIP 109463 / NCPPB 4357 / Et1/99).